A 231-amino-acid polypeptide reads, in one-letter code: GFP-like fluorescent chromoprotein FP506 (231 aa).

A cross-link (5-imidazolinone (Asn-Gly)) is located at residues 66–68 (NYG). 2,3-didehydrotyrosine is present on Tyr-67.

It belongs to the GFP family. In terms of processing, contains a chromophore consisting of modified amino acid residues. The chromophore is formed by autocatalytic backbone condensation between Xaa-N and Gly-(N+2), and oxidation of Tyr-(N+1) to didehydrotyrosine. Maturation of the chromophore requires nothing other than molecular oxygen. The precise stereochemistry of the tyrosine has not been determined. As to expression, tentacle and oral disk.

In terms of biological role, pigment protein that is yellow-green in color. In Zoanthus sp. (Green polyp), this protein is GFP-like fluorescent chromoprotein FP506.